The primary structure comprises 391 residues: F-box protein At2g34280 (391 aa).

The region spanning 1 to 43 is the F-box domain; that stretch reads MDLLPYDVVEHILERLDVKSLLNCKSVSKQWRSTIRCRAFQER.

In Arabidopsis thaliana (Mouse-ear cress), this protein is F-box protein At2g34280.